The chain runs to 525 residues: Potassium voltage-gated channel subfamily A member 3 (525 aa).

The disordered stretch occupies residues 1 to 23; sequence MTVVPGDHLLEPEAAGGGGGDPP. Residues 1 to 184 lie on the Cytoplasmic side of the membrane; the sequence is MTVVPGDHLL…EYPESSGPAR (184 aa). Residues 185 to 203 form a helical membrane-spanning segment; that stretch reads GIAIVSVLVILISIVIFCL. Residues 204 to 244 lie on the Extracellular side of the membrane; it reads ETLPEFRDEKDYPASPSQDVFEAANNSTSGASSGASSFSDP. Residue asparagine 229 is glycosylated (N-linked (GlcNAc...) asparagine). Residues 245–266 form a helical membrane-spanning segment; it reads FFVVETLCIIWFSFELLVRFFA. Cysteine 267 carries S-palmitoyl cysteine lipidation. The Cytoplasmic segment spans residues 267–277; it reads CPSKATFSRNI. Residues 278 to 298 traverse the membrane as a helical segment; that stretch reads MNLIDIVAIIPYFITLGTELA. At 299 to 312 the chain is on the extracellular side; sequence ERQGNGQQAMSLAI. The chain crosses the membrane as a helical; Voltage-sensor span at residues 313-331; the sequence is LRVIRLVRVFRIFKLSRHS. The Cytoplasmic portion of the chain corresponds to 332-347; that stretch reads KGLQILGQTLKASMRE. Residues 348–367 traverse the membrane as a helical segment; sequence LGLLIFFLFIGVILFSSAVY. Residues 368–408 are Extracellular-facing; sequence FAEADDPSSGFNSIPDAFWWAVVTMTTVGYGDMHPVTIGGK. A Selectivity filter motif is present at residues 394 to 399; the sequence is TVGYGD. The chain crosses the membrane as a helical span at residues 409 to 431; that stretch reads IVGSLCAIAGVLTIALPVPVIVS. The Cytoplasmic segment spans residues 432–525; sequence NFNYFYHRET…VNIKKIFTDV (94 aa). The interaction with KCNE4 stretch occupies residues 432–525; that stretch reads NFNYFYHRET…VNIKKIFTDV (94 aa). Tyrosine 449 carries the post-translational modification Phosphotyrosine. Serine 470 is subject to Phosphoserine; by PKA. A PDZ-binding motif is present at residues 523-525; the sequence is TDV.

This sequence belongs to the potassium channel family. A (Shaker) (TC 1.A.1.2) subfamily. Kv1.3/KCNA3 sub-subfamily. As to quaternary structure, homotetramer. Forms heterooligomers with KCNE4 which inhibits KCNA3 activity by impairing localization to the cell membrane. The stoichiometry of KCNA3 and KCNE4 in the heterooligomers are 4:1, 4:2, 4:3 or 4:4 respectively. Increasing the number of KCNE4 subunits steadily slows the activation KCNA3 and decreases its abundance at the cell membrane. However, a single subunit of KCNE4 is sufficient for the cooperative enhancement of the inactivating function of the channel. Interacts with SEC24D; this interaction is reduced in the presence of KCNE4. Interacts with DLG1, DLG2 and DLG4 via their PDZ domains. In terms of processing, phosphorylation on Tyr-449 inhibits its channel activity. N-glycosylation promotes the cell surface expression.

It is found in the cell membrane. The catalysed reaction is K(+)(in) = K(+)(out). Its activity is regulated as follows. Activity is up-regulated by JAK2. Functionally, mediates the voltage-dependent potassium ion permeability of excitable membranes. Assuming opened or closed conformations in response to the voltage difference across the membrane, the protein forms a potassium-selective channel through which potassium ions may pass in accordance with their electrochemical gradient. The chain is Potassium voltage-gated channel subfamily A member 3 (Kcna3) from Rattus norvegicus (Rat).